Consider the following 208-residue polypeptide: Glutathione S-transferase 2 (208 aa).

One can recognise a GST N-terminal domain in the interval 1 to 78; that stretch reads MSYKLTYFSI…HLARKYNLNG (78 aa). Residues Tyr7, Lys42, 49–50, and 62–63 contribute to the glutathione site; these read QL and QS. The GST C-terminal domain occupies 80-200; sequence NEMETTYIDM…YCEKRDAAKV (121 aa).

Belongs to the GST superfamily. Pi family. As to quaternary structure, homodimer. As to expression, hypodermis, wall of the seminal receptacle and spermatozoa of adult worms.

The catalysed reaction is RX + glutathione = an S-substituted glutathione + a halide anion + H(+). In terms of biological role, appears to play a central role in the parasite detoxification system. This Onchocerca volvulus protein is Glutathione S-transferase 2 (GST2).